A 29-amino-acid polypeptide reads, in one-letter code: Thrombin-like enzyme collinein-2 (29 aa).

In terms of assembly, monomer. As to expression, expressed by the venom gland.

It localises to the secreted. Its function is as follows. Thrombin-like snake venom serine protease. In Crotalus durissus collilineatus (Brazilian rattlesnake), this protein is Thrombin-like enzyme collinein-2.